The sequence spans 124 residues: Galanin peptides (124 aa).

Positions 1–19 are cleaved as a signal peptide; that stretch reads MARGSVILLGWLLLVVTLS. The propeptide occupies 20–30; it reads ATLGLGMPAKE. Thr61 carries the post-translational modification Threonine amide. A phosphoserine mark is found at Ser117 and Ser118.

Belongs to the galanin family. In terms of tissue distribution, expressed in retinal progenitor cells and retinal ganglion cells (at protein level).

It localises to the secreted. Endocrine hormone of the central and peripheral nervous systems that binds and activates the G protein-coupled receptors GALR1, GALR2, and GALR3. This small neuropeptide may regulate diverse physiologic functions including contraction of smooth muscle of the gastrointestinal and genitourinary tract, growth hormone and insulin release and adrenal secretion. The polypeptide is Galanin peptides (Gal) (Mus musculus (Mouse)).